The chain runs to 495 residues: UPF0371 protein cgR_2887 (495 aa).

It belongs to the UPF0371 family.

The polypeptide is UPF0371 protein cgR_2887 (Corynebacterium glutamicum (strain R)).